The sequence spans 556 residues: Beta-caryophyllene synthase TPS9FN (556 aa).

Arg-273, Asp-310, Asp-314, Arg-451, and Asp-454 together coordinate (2E,6E)-farnesyl diphosphate. Positions 310 and 314 each coordinate Mg(2+). The short motif at 310–314 is the DDXXD motif element; it reads DDIYD. 3 residues coordinate Mg(2+): Asp-454, Ser-458, and Glu-462.

This sequence belongs to the terpene synthase family. Tpsb subfamily. Mg(2+) is required as a cofactor. It depends on Mn(2+) as a cofactor. In terms of tissue distribution, expressed in glandular trichomes two to four weeks after flowering onset.

It catalyses the reaction (2E,6E)-farnesyl diphosphate = (-)-(E)-beta-caryophyllene + diphosphate. It carries out the reaction (2E,6E)-farnesyl diphosphate = alpha-humulene + diphosphate. It participates in secondary metabolite biosynthesis; terpenoid biosynthesis. Functionally, involved in sesquiterpene olefins biosynthesis, constituants of cannabinoids and terpenoids-rich resins. Catalyzes mainly the conversion of (2E)-farnesyl diphosphate to beta-caryophyllene and alpha-humulene. Can also use (2E)-geranyl diphosphate as substrate with low efficiency. In Cannabis sativa (Hemp), this protein is Beta-caryophyllene synthase TPS9FN.